A 433-amino-acid polypeptide reads, in one-letter code: Pyrimidine-nucleoside phosphorylase (433 aa).

81 to 83 (KHS) is a binding site for phosphate. Positions 88 and 90 each coordinate K(+). Residues Thr-92, 108–110 (KMS), and Thr-120 contribute to the phosphate site. Positions 168 and 187 each coordinate substrate. Positions 243, 246, and 255 each coordinate K(+).

This sequence belongs to the thymidine/pyrimidine-nucleoside phosphorylase family. Homodimer. K(+) is required as a cofactor.

The catalysed reaction is uridine + phosphate = alpha-D-ribose 1-phosphate + uracil. It carries out the reaction thymidine + phosphate = 2-deoxy-alpha-D-ribose 1-phosphate + thymine. The enzyme catalyses 2'-deoxyuridine + phosphate = 2-deoxy-alpha-D-ribose 1-phosphate + uracil. In terms of biological role, catalyzes phosphorolysis of the pyrimidine nucleosides uridine, thymidine and 2'-deoxyuridine with the formation of the corresponding pyrimidine base and ribose-1-phosphate. This is Pyrimidine-nucleoside phosphorylase from Bacillus subtilis (strain 168).